A 392-amino-acid polypeptide reads, in one-letter code: Basic salivary proline-rich protein 1 (392 aa).

An N-terminal signal peptide occupies residues 1–16 (MLLILLSVALLALSSA). At Gln-17 the chain carries Pyrrolidone carboxylic acid. The span at 19-28 (LNEDVSQEES) shows a compositional bias: polar residues. The tract at residues 19–392 (LNEDVSQEES…QGGRPSRPPQ (374 aa)) is disordered. A compositionally biased stretch (low complexity) spans 34-47 (GNPQGPSPQGGNKP). At Ser-40 the chain carries Phosphoserine; alternate. An O-linked (Hex) serine; alternate glycan is attached at Ser-40. Residues 48–83 (QGPPPPPGKPQGPPPQGGNKPQGPPPPGKPQGPPPQ) are compositionally biased toward pro residues. 15 consecutive repeat copies span residues 53 to 72 (PPGKPQGPPPQGGNKPQGPP), 73 to 92 (PPGKPQGPPPQGDKSRSPRS), 93 to 112 (PPGKPQGPPPQGGNQPQGPP), 114 to 133 (PPGKPQGPPPQGGNKPQGPP), 134 to 153 (PPGKPQGPPPQGDKSQSPRS), 154 to 173 (PPGKPQGPPPQGGNQPQGPP), 175 to 194 (PPGKPQGPPPQGGNKPQGPP), 195 to 214 (PPGKPQGPPPQGDKSQSPRS), 215 to 234 (PPGKPQGPPPQGGNQPQGPP), 236 to 255 (PPGKPQGPPQQGGNRPQGPP), 256 to 275 (PPGKPQGPPPQGDKSRSPQS), 276 to 295 (PPGKPQGPPPQGGNQPQGPP), 297 to 316 (PPGKPQGPPPQGGNKPQGPP), 317 to 336 (PPGKPQGPPAQGGSKSQSAR), and 338 to 357 (PPGKPQGPPQQEGNNPQGPP). A 15 X 20 AA approximate tandem repeats of P-P-G-K-P-Q-G-P-P-[PAQ]-Q-[GE]-[GD]-[NKS]-[KSQRN]-[PRQS]-[QS] [GPS]-[PQAR]-[PSR] region spans residues 53–357 (PPGKPQGPPP…QEGNNPQGPP (305 aa)). Ser-87 carries an O-linked (HexNAc...) serine glycan. Positions 91-144 (RSPPGKPQGPPPQGGNQPQGPPPPPGKPQGPPPQGGNKPQGPPPPGKPQGPPPQ) are enriched in pro residues. At Ser-92 the chain carries Phosphoserine. Ser-150 carries the post-translational modification Phosphoserine; alternate. Ser-150 is a glycosylation site (O-linked (Hex) serine; alternate). 4 stretches are compositionally biased toward pro residues: residues 152–205 (RSPP…PPPQ), 213–243 (RSPPGKPQGPPPQGGNQPQGPPPPPGKPQGP), 252–266 (QGPPPPGKPQGPPPQ), and 274–324 (QSPP…PQGP). A compositionally biased stretch (low complexity) spans 325 to 334 (PAQGGSKSQS). An O-linked (HexNAc...) serine glycan is attached at Ser-330. Positions 354 to 392 (QGPPPPAGGNPQQPQAPPAGQPQGPPRPPQGGRPSRPPQ) are enriched in pro residues.

O-glycosylated. O-glycosylation on Ser-87 is prevalent in head and neck cancer patients. O-Glycosylation on Ser-330 has a 5 times prevalence in head and neck cancers. Post-translationally, proteolytically cleaved at the tripeptide Xaa-Pro-Gln, where Xaa in the P(3) position is mostly lysine. The endoprotease may be of microbial origin. In terms of processing, pyroglutamate formation occurs on terminal Gln residues of cleaved peptides. Besides on the N-terminal of mature PBR1, pyroglutamate formation found on at least Gln-58.

It is found in the secreted. The polypeptide is Basic salivary proline-rich protein 1 (PRB1) (Homo sapiens (Human)).